The sequence spans 330 residues: DNA-binding death effector domain-containing protein 2 (330 aa).

Residues 25 to 104 (SLHRMFEVVG…RHDLLPHLAR (80 aa)) form the DED domain. A Nuclear localization signal motif is present at residues 104 to 109 (RKRRRP). A disordered region spans residues 104–195 (RKRRRPVSPE…HQELGRPSSE (92 aa)). The span at 137–147 (ASSSSDSPQSQ) shows a compositional bias: low complexity. Residues 156–174 (KRQRRSRGRPSSGARQRRR) carry the Bipartite nuclear localization signal motif.

As to quaternary structure, interacts with CASP8, CASP10 and GTF3C3. Homodimerizes and heterodimerizes with DEDD. In terms of tissue distribution, expression is high in liver, heart, kidney, and testis but low in brain, spleen, lung, and skeleton muscle.

It is found in the nucleus. The protein localises to the nucleolus. May play a critical role in death receptor-induced apoptosis and may target CASP8 and CASP10 to the nucleus. May regulate degradation of intermediate filaments during apoptosis. May play a role in the general transcription machinery in the nucleus and might be an important regulator of the activity of GTF3C3. The polypeptide is DNA-binding death effector domain-containing protein 2 (Dedd2) (Mus musculus (Mouse)).